A 490-amino-acid polypeptide reads, in one-letter code: Betaine aldehyde dehydrogenase (490 aa).

K(+) is bound by residues T26, I27, and D93. 150 to 152 (GAW) is an NAD(+) binding site. Catalysis depends on K162, which acts as the Charge relay system. 176–179 (KPSE) provides a ligand contact to NAD(+). K(+) is bound at residue V180. 230-233 (GVAS) serves as a coordination point for NAD(+). L246 contacts K(+). E252 (proton acceptor) is an active-site residue. Residues G254, C286, and E387 each coordinate NAD(+). The active-site Nucleophile is C286. The residue at position 286 (C286) is a Cysteine sulfenic acid (-SOH). Residues K457 and G460 each coordinate K(+). Residue E464 is the Charge relay system of the active site.

The protein belongs to the aldehyde dehydrogenase family. Dimer of dimers. It depends on K(+) as a cofactor.

It catalyses the reaction betaine aldehyde + NAD(+) + H2O = glycine betaine + NADH + 2 H(+). It functions in the pathway amine and polyamine biosynthesis; betaine biosynthesis via choline pathway; betaine from betaine aldehyde: step 1/1. Its function is as follows. Involved in the biosynthesis of the osmoprotectant glycine betaine. Catalyzes the irreversible oxidation of betaine aldehyde to the corresponding acid. The polypeptide is Betaine aldehyde dehydrogenase (Escherichia coli O9:H4 (strain HS)).